The sequence spans 518 residues: Membrane-bound lytic murein transglycosylase F (518 aa).

Positions M1 to A21 are cleaved as a signal peptide. The interval L22 to G269 is non-LT domain. The segment at D270–N518 is LT domain. E314 is a catalytic residue.

In the N-terminal section; belongs to the bacterial solute-binding protein 3 family. It in the C-terminal section; belongs to the transglycosylase Slt family.

It is found in the cell outer membrane. The enzyme catalyses Exolytic cleavage of the (1-&gt;4)-beta-glycosidic linkage between N-acetylmuramic acid (MurNAc) and N-acetylglucosamine (GlcNAc) residues in peptidoglycan, from either the reducing or the non-reducing ends of the peptidoglycan chains, with concomitant formation of a 1,6-anhydrobond in the MurNAc residue.. In terms of biological role, murein-degrading enzyme that degrades murein glycan strands and insoluble, high-molecular weight murein sacculi, with the concomitant formation of a 1,6-anhydromuramoyl product. Lytic transglycosylases (LTs) play an integral role in the metabolism of the peptidoglycan (PG) sacculus. Their lytic action creates space within the PG sacculus to allow for its expansion as well as for the insertion of various structures such as secretion systems and flagella. The polypeptide is Membrane-bound lytic murein transglycosylase F (Shigella sonnei (strain Ss046)).